Consider the following 253-residue polypeptide: Phosphate import ATP-binding protein PstB (253 aa).

Residues 1–249 (MKLMDVRVSG…PRHELTKKFL (249 aa)) form the ABC transporter domain. 38–45 (GPSGSGKS) lines the ATP pocket.

The protein belongs to the ABC transporter superfamily. Phosphate importer (TC 3.A.1.7) family. In terms of assembly, the complex is composed of two ATP-binding proteins (PstB), two transmembrane proteins (PstC and PstA) and a solute-binding protein (PstS).

Its subcellular location is the cell membrane. It carries out the reaction phosphate(out) + ATP + H2O = ADP + 2 phosphate(in) + H(+). In terms of biological role, part of the ABC transporter complex PstSACB involved in phosphate import. Responsible for energy coupling to the transport system. The polypeptide is Phosphate import ATP-binding protein PstB (Aeropyrum pernix (strain ATCC 700893 / DSM 11879 / JCM 9820 / NBRC 100138 / K1)).